Consider the following 490-residue polypeptide: Cobyric acid synthase (490 aa).

Residues 252–428 enclose the GATase cobBQ-type domain; it reads ARRVAVVRLP…WHGAFEGDAL (177 aa). C333 serves as the catalytic Nucleophile. Residue H420 is part of the active site.

This sequence belongs to the CobB/CobQ family. CobQ subfamily.

Its pathway is cofactor biosynthesis; adenosylcobalamin biosynthesis. Functionally, catalyzes amidations at positions B, D, E, and G on adenosylcobyrinic A,C-diamide. NH(2) groups are provided by glutamine, and one molecule of ATP is hydrogenolyzed for each amidation. The protein is Cobyric acid synthase of Mycolicibacterium vanbaalenii (strain DSM 7251 / JCM 13017 / BCRC 16820 / KCTC 9966 / NRRL B-24157 / PYR-1) (Mycobacterium vanbaalenii).